Reading from the N-terminus, the 204-residue chain is Proteasome subunit beta type-3 (204 aa).

Belongs to the peptidase T1B family. The 26S proteasome consists of a 20S proteasome core and two 19S regulatory subunits. The 20S proteasome core is composed of 28 subunits that are arranged in four stacked rings, resulting in a barrel-shaped structure. The two end rings are each formed by seven alpha subunits, and the two central rings are each formed by seven beta subunits. The catalytic chamber with the active sites is on the inside of the barrel.

It localises to the cytoplasm. Its subcellular location is the nucleus. Non-catalytic component of the proteasome, a multicatalytic proteinase complex which is characterized by its ability to cleave peptides with Arg, Phe, Tyr, Leu, and Glu adjacent to the leaving group at neutral or slightly basic pH. The proteasome has an ATP-dependent proteolytic activity. The protein is Proteasome subunit beta type-3 (pbs-3) of Caenorhabditis elegans.